The following is a 100-amino-acid chain: Cytochrome bo(3) ubiquinol oxidase subunit 4 (100 aa).

The Cytoplasmic portion of the chain corresponds to 1–9; that stretch reads MLKNRYLKY. Residues 10–32 form a helical membrane-spanning segment; the sequence is LFILILLSILSIMPIFAIIYRIF. At 33–36 the chain is on the extracellular side; it reads SRNY. Residues 37–59 traverse the membrane as a helical segment; the sequence is LYAFIIVCLFFQILAHIKFFLNL. Residues 60 to 68 are Cytoplasmic-facing; it reads DFSLEQRWK. A helical transmembrane segment spans residues 69–90; it reads LISVIFSLVVGLIILLGSIWVI. Over 91–100 the chain is Extracellular; sequence KNLNNNLCIM.

It belongs to the cytochrome c oxidase bacterial subunit 4 family. As to quaternary structure, heterooctamer of two A chains, two B chains, two C chains and two D chains.

Its subcellular location is the cell membrane. Cytochrome bo(3) ubiquinol terminal oxidase is the component of the aerobic respiratory chain of E.coli that predominates when cells are grown at high aeration. Has proton pump activity across the membrane in addition to electron transfer, pumping 2 protons/electron. The chain is Cytochrome bo(3) ubiquinol oxidase subunit 4 (cyoD) from Buchnera aphidicola subsp. Baizongia pistaciae (strain Bp).